The primary structure comprises 746 residues: Protein C-mannosyl-transferase DPY19L1 (746 aa).

A disordered region spans residues 1 to 68; it reads MVLQARSKHR…RAGTAAPAPD (68 aa). Phosphoserine is present on residues Ser28 and Ser31. The segment covering 59-68 has biased composition (low complexity); that stretch reads RAGTAAPAPD. The next 11 helical transmembrane spans lie at 137–159, 227–247, 257–279, 307–325, 331–350, 357–374, 380–396, 405–425, 481–501, 520–540, and 562–582; these read LYYS…WMIM, ACFY…LFFI, LGGV…VMWT, LCRG…FMLP, FVLL…GYID, IIYM…LMFG, TSYY…MLAM, VSEL…TVIL, LLLP…FNDM, GELV…VLIM, and LFGW…ILAA.

It belongs to the dpy-19 family.

It is found in the endoplasmic reticulum membrane. The catalysed reaction is L-tryptophyl-[protein] + a di-trans,poly-cis-dolichyl beta-D-mannosyl phosphate = C-alpha-D-mannosyl-L-tryptophyl-[protein] + a di-trans,poly-cis-dolichyl phosphate + H(+). It participates in protein modification; protein glycosylation. Its function is as follows. C-mannosyltransferase that mediates the C-mannosylation tryptophan residues on target proteins. The reaction occurs on the luminal side of the endoplasmic reticulum and involves the transfer of a mannose unit from a dolichylphosphate mannose (Dol-P-Man) donor to an acceptor protein containing a WxxW consensus sequence. C-mannosylates the first two tryptophans in the WxxWxxWxxC sequence motif in thrombospondin (TSP) type-1 repeats of UNC5A. Regulates neurite extension during development. This Mus musculus (Mouse) protein is Protein C-mannosyl-transferase DPY19L1 (Dpy19l1).